The chain runs to 477 residues: Putative BTB/POZ domain-containing protein R830 (477 aa).

The BTB domain occupies 13–83; the sequence is SDLELILVDK…FYGIETNNDP (71 aa).

Belongs to the mimivirus BTB/WD family.

In Acanthamoeba polyphaga mimivirus (APMV), this protein is Putative BTB/POZ domain-containing protein R830.